Reading from the N-terminus, the 122-residue chain is Large ribosomal subunit protein uL14 (122 aa).

The protein belongs to the universal ribosomal protein uL14 family. In terms of assembly, part of the 50S ribosomal subunit. Forms a cluster with proteins L3 and L19. In the 70S ribosome, L14 and L19 interact and together make contacts with the 16S rRNA in bridges B5 and B8.

Binds to 23S rRNA. Forms part of two intersubunit bridges in the 70S ribosome. The protein is Large ribosomal subunit protein uL14 of Dechloromonas aromatica (strain RCB).